The following is a 492-amino-acid chain: 2,3-bisphosphoglycerate-independent phosphoglycerate mutase (492 aa).

Residues Asp-11 and Ser-61 each coordinate Mn(2+). Ser-61 functions as the Phosphoserine intermediate in the catalytic mechanism. Residues His-118, Arg-147–Asp-148, Arg-177, Arg-183, Arg-248–Arg-251, and Lys-321 contribute to the substrate site. 5 residues coordinate Mn(2+): Asp-387, His-391, Asp-428, His-429, and His-446.

It belongs to the BPG-independent phosphoglycerate mutase family. Monomer. Requires Mn(2+) as cofactor.

The catalysed reaction is (2R)-2-phosphoglycerate = (2R)-3-phosphoglycerate. The protein operates within carbohydrate degradation; glycolysis; pyruvate from D-glyceraldehyde 3-phosphate: step 3/5. Catalyzes the interconversion of 2-phosphoglycerate and 3-phosphoglycerate. In Helicobacter acinonychis (strain Sheeba), this protein is 2,3-bisphosphoglycerate-independent phosphoglycerate mutase.